We begin with the raw amino-acid sequence, 89 residues long: Large ribosomal subunit protein eL43 (89 aa).

The Zn(2+) site is built by C38, C41, C56, and C59. A C4-type zinc finger spans residues 38–59; the sequence is CPVCHKRAVKRVGTGIWRCTKC.

Belongs to the eukaryotic ribosomal protein eL43 family. Putative zinc-binding subfamily. Part of the 50S ribosomal subunit. Requires Zn(2+) as cofactor.

In terms of biological role, binds to the 23S rRNA. The sequence is that of Large ribosomal subunit protein eL43 from Methanopyrus kandleri (strain AV19 / DSM 6324 / JCM 9639 / NBRC 100938).